A 434-amino-acid polypeptide reads, in one-letter code: CinA-like protein (434 aa).

The protein belongs to the CinA family.

The polypeptide is CinA-like protein (Mycolicibacterium paratuberculosis (strain ATCC BAA-968 / K-10) (Mycobacterium paratuberculosis)).